Consider the following 1303-residue polypeptide: Ninein-like protein (1303 aa).

EF-hand domains lie at 8–43 (RYVA…LSLD) and 61–77 (RVNF…VLSR). Residues 107 to 135 (TKRYGRRSRPDKTDLELTADSDSLPFGTD) are disordered. EF-hand domains are found at residues 203–238 (VTDG…IGLK) and 240–275 (LEAE…PHDH). The Ca(2+) site is built by Asp253, Asp255, Asp257, Lys259, and Glu264. The stretch at 464–590 (EYESEVLLEQ…CSELELLKSQ (127 aa)) forms a coiled coil. Over residues 592-617 (SGKRTRLSRSSLPANDWSNRRALTTE) the composition is skewed to polar residues. The tract at residues 592 to 634 (SGKRTRLSRSSLPANDWSNRRALTTESDSDDPEMKKGTSPQVR) is disordered. 3 coiled-coil regions span residues 660-791 (ELAM…LEAE), 821-876 (LAVL…LSAR), and 919-1146 (SKQL…VQAQ). The interval 1156–1181 (EQMGSGTQEHASHLQTQLAEQQRRTQ) is disordered. Residues 1159 to 1175 (GSGTQEHASHLQTQLAE) are compositionally biased toward polar residues. A coiled-coil region spans residues 1202–1278 (QEQYEKLMAS…EQRQKSAEKK (77 aa)).

The protein localises to the cytoplasm. The protein resides in the cytoskeleton. Its subcellular location is the microtubule organizing center. It is found in the centrosome. Required for the intracellular transport of organelles and vesicles, and is essential for the photoreceptor's outer segments formation, maintenance and function. In Danio rerio (Zebrafish), this protein is Ninein-like protein (Ninl).